The primary structure comprises 209 residues: LexA repressor (209 aa).

The segment at residues 28–48 (RVELAKILGFRSANAAEEHLK) is a DNA-binding region (H-T-H motif). Active-site for autocatalytic cleavage activity residues include serine 126 and lysine 163.

The protein belongs to the peptidase S24 family. Homodimer.

The catalysed reaction is Hydrolysis of Ala-|-Gly bond in repressor LexA.. Functionally, represses a number of genes involved in the response to DNA damage (SOS response), including recA and lexA. In the presence of single-stranded DNA, RecA interacts with LexA causing an autocatalytic cleavage which disrupts the DNA-binding part of LexA, leading to derepression of the SOS regulon and eventually DNA repair. This Psychromonas ingrahamii (strain DSM 17664 / CCUG 51855 / 37) protein is LexA repressor.